A 135-amino-acid chain; its full sequence is Large ribosomal subunit protein uL16c (135 aa).

Residues Met-1–Arg-23 are compositionally biased toward basic residues. The interval Met-1–Gly-24 is disordered.

Belongs to the universal ribosomal protein uL16 family. In terms of assembly, part of the 50S ribosomal subunit.

The protein localises to the plastid. It localises to the chloroplast. This is Large ribosomal subunit protein uL16c from Pelargonium hortorum (Common geranium).